Consider the following 161-residue polypeptide: Nucleotide-binding protein Bmul_0741/BMULJ_02519 (161 aa).

This sequence belongs to the YajQ family.

Its function is as follows. Nucleotide-binding protein. The polypeptide is Nucleotide-binding protein Bmul_0741/BMULJ_02519 (Burkholderia multivorans (strain ATCC 17616 / 249)).